Consider the following 312-residue polypeptide: Ribosomal RNA small subunit methyltransferase H (312 aa).

S-adenosyl-L-methionine contacts are provided by residues 33–35 (GGH), Asp-53, Phe-80, Asp-102, and Gln-109.

This sequence belongs to the methyltransferase superfamily. RsmH family.

The protein localises to the cytoplasm. It catalyses the reaction cytidine(1402) in 16S rRNA + S-adenosyl-L-methionine = N(4)-methylcytidine(1402) in 16S rRNA + S-adenosyl-L-homocysteine + H(+). Its function is as follows. Specifically methylates the N4 position of cytidine in position 1402 (C1402) of 16S rRNA. This is Ribosomal RNA small subunit methyltransferase H from Heliobacterium mobile (Heliobacillus mobilis).